The following is a 582-amino-acid chain: Aspartate--tRNA ligase (582 aa).

Residue Glu-174 participates in L-aspartate binding. Residues 198 to 201 (QITK) are aspartate. Arg-220 contacts L-aspartate. ATP contacts are provided by residues 220 to 222 (RDE) and Gln-229. His-443 provides a ligand contact to L-aspartate. An ATP-binding site is contributed by Glu-477. An L-aspartate-binding site is contributed by Arg-484. Position 529-532 (529-532 (GLDR)) interacts with ATP.

This sequence belongs to the class-II aminoacyl-tRNA synthetase family. Type 1 subfamily. As to quaternary structure, homodimer.

Its subcellular location is the cytoplasm. The catalysed reaction is tRNA(Asp) + L-aspartate + ATP = L-aspartyl-tRNA(Asp) + AMP + diphosphate. In terms of biological role, catalyzes the attachment of L-aspartate to tRNA(Asp) in a two-step reaction: L-aspartate is first activated by ATP to form Asp-AMP and then transferred to the acceptor end of tRNA(Asp). This Streptococcus pyogenes serotype M18 (strain MGAS8232) protein is Aspartate--tRNA ligase.